A 447-amino-acid polypeptide reads, in one-letter code: Chitobiosyldiphosphodolichol beta-mannosyltransferase (447 aa).

Topologically, residues Met1–Asn8 are lumenal. A helical membrane pass occupies residues Ile9–Val29. Residues Val30 to Ala127 are Cytoplasmic-facing. The segment at residues Val128–Val148 is an intramembrane region (helical). Over Lys149–Lys447 the chain is Lumenal.

This sequence belongs to the glycosyltransferase group 1 family.

Its subcellular location is the endoplasmic reticulum membrane. It catalyses the reaction an N,N'-diacetylchitobiosyl-diphospho-di-trans,poly-cis-dolichol + GDP-alpha-D-mannose = a beta-D-Man-(1-&gt;4)-beta-D-GlcNAc-(1-&gt;4)-alpha-D-GlcNAc-diphospho-di-trans,poly-cis-dolichol + GDP + H(+). It functions in the pathway protein modification; protein glycosylation. Functionally, participates in the formation of the lipid-linked precursor oligosaccharide for N-glycosylation. Involved in assembling the dolichol-pyrophosphate-GlcNAc(2)-Man(5) intermediate on the cytoplasmic surface of the ER. The sequence is that of Chitobiosyldiphosphodolichol beta-mannosyltransferase (ALG1) from Kluyveromyces lactis (strain ATCC 8585 / CBS 2359 / DSM 70799 / NBRC 1267 / NRRL Y-1140 / WM37) (Yeast).